The chain runs to 276 residues: MQTIIDAWFVQGMIKATSDAWLKGWDERNGGNLTLRLDEADIEPYAADFHAKPRYIALSQPMPILANQPFIVTGSGKFFRNVQLDPAANLGVVKVDSDGAGYHILWGLTEDAVPTSELPAHFLSHSERIKLTGGKDRVIMHCHATNLIALTYVLENHSDLFTRKLWEGSTECLVVFPDGVGILPWMVPGTDEIGQATAETMQKHSLVLWPFHGVFGSGPTLDETFGLIDTAEKSAEVLVKVLSMGGMKQTITREELIALGKRFNVQPLQSALDLYP.

Residue E117 is part of the active site. Positions 141, 143, and 212 each coordinate Zn(2+).

This sequence belongs to the aldolase class II family. RhaD subfamily. Homotetramer. It depends on Zn(2+) as a cofactor.

It is found in the cytoplasm. The catalysed reaction is L-rhamnulose 1-phosphate = (S)-lactaldehyde + dihydroxyacetone phosphate. It functions in the pathway carbohydrate degradation; L-rhamnose degradation; glycerone phosphate from L-rhamnose: step 3/3. Functionally, catalyzes the reversible cleavage of L-rhamnulose-1-phosphate to dihydroxyacetone phosphate (DHAP) and L-lactaldehyde. The chain is Rhamnulose-1-phosphate aldolase from Klebsiella pneumoniae (strain 342).